The primary structure comprises 391 residues: Probable sugar efflux transporter (391 aa).

A run of 12 helical transmembrane segments spans residues 16–36 (VFVFSLSAFIFNTTEFVPVAL), 51–71 (VGLMITAYAWVVSLGSLPLML), 82–102 (LLFLFALFILSHILSALAWNF), 110–130 (MGIAFAHSIFWSITASLVIRV), 138–158 (QALGLLALGSSLAMILGLPLG), 170–190 (TFGVIGGVATLIALLMWKLLP), 210–230 (PLLMGIYLLVIMVISGHFTTY), 247–267 (ITTLMLFVFGLAGVVGSFLFG), 277–297 (FIAFAMVLVICPQLLLFVFKN), 300–320 (WVVFLQIFLWGIGITSLGISL), 338–358 (IYSGSYNVGIGSGALFGSIVI), and 361–381 (LGLGYIGFVGGALGLLALFWL).

It belongs to the major facilitator superfamily. SotB (TC 2.A.1.2) family.

Its subcellular location is the cell inner membrane. In terms of biological role, involved in the efflux of sugars. The physiological role may be the reduction of the intracellular concentration of toxic sugars or sugar metabolites. The chain is Probable sugar efflux transporter from Helicobacter pylori (strain ATCC 700392 / 26695) (Campylobacter pylori).